A 159-amino-acid polypeptide reads, in one-letter code: Peripheral myelin protein 22 (159 aa).

Residue M1 is a topological domain, cytoplasmic. A helical membrane pass occupies residues 2–31 (LLLLLGIIVLHVAVLVLLFVATIVSQWIVG). Over 32 to 64 (NGHATDLWQNCSTTSGNVQHCLSSSANEWLQSV) the chain is Extracellular. An N-linked (GlcNAc...) asparagine glycan is attached at N41. A helical membrane pass occupies residues 65-91 (QATMILSIIFSVLSLFLFFCQLFTLTK). Residues 92–95 (GGRF) lie on the Cytoplasmic side of the membrane. A helical membrane pass occupies residues 96-119 (YITGIFQILAGLCVMSAASIYTVR). The Extracellular segment spans residues 120 to 133 (HPEWHLDSAYSYGF). Residues 134–156 (AYILAWVAFPLALLSGVVYVILR) form a helical membrane-spanning segment. Topologically, residues 157-159 (KRE) are cytoplasmic.

The protein belongs to the PMP-22/EMP/MP20 family. Post-translationally, ubiquitinated by the DCX(DCAF13) E3 ubiquitin ligase complex, leading to its degradation.

The protein localises to the cell membrane. In terms of biological role, might be involved in growth regulation, and in myelinization in the peripheral nervous system. This Equus caballus (Horse) protein is Peripheral myelin protein 22 (PMP22).